The chain runs to 316 residues: tRNA dimethylallyltransferase (316 aa).

Residue 17–24 (GPTASGKT) coordinates ATP. 19–24 (TASGKT) serves as a coordination point for substrate. Interaction with substrate tRNA regions lie at residues 42-45 (DSAL), 166-170 (QRLSR), 247-252 (RCVGYR), and 280-287 (KRQITWLR).

Belongs to the IPP transferase family. Monomer. Mg(2+) is required as a cofactor.

It catalyses the reaction adenosine(37) in tRNA + dimethylallyl diphosphate = N(6)-dimethylallyladenosine(37) in tRNA + diphosphate. In terms of biological role, catalyzes the transfer of a dimethylallyl group onto the adenine at position 37 in tRNAs that read codons beginning with uridine, leading to the formation of N6-(dimethylallyl)adenosine (i(6)A). The protein is tRNA dimethylallyltransferase of Escherichia coli O157:H7.